The sequence spans 378 residues: Ferredoxin--NADP reductase, embryo isozyme, chloroplastic (378 aa).

The N-terminal 62 residues, methionine 1–methionine 62, are a transit peptide targeting the chloroplast. In terms of domain architecture, FAD-binding FR-type spans lysine 93 to leucine 221. Residues arginine 153–serine 156, cysteine 174–arginine 176, tyrosine 180, isoleucine 195–serine 197, and threonine 237 contribute to the FAD site. NADP(+) contacts are provided by serine 156 and arginine 176. NADP(+)-binding positions include threonine 237, valine 269–alanine 270, serine 299–arginine 300, lysine 309, glycine 337–leucine 338, and glutamate 376.

The protein belongs to the ferredoxin--NADP reductase type 1 family. The cofactor is FAD.

Its subcellular location is the plastid. It is found in the chloroplast. It catalyses the reaction 2 reduced [2Fe-2S]-[ferredoxin] + NADP(+) + H(+) = 2 oxidized [2Fe-2S]-[ferredoxin] + NADPH. The protein operates within energy metabolism; photosynthesis. Functionally, may play a key role in regulating the relative amounts of cyclic and non-cyclic electron flow to meet the demands of the plant for ATP and reducing power. Is involved in nitrate assimilation. The chain is Ferredoxin--NADP reductase, embryo isozyme, chloroplastic from Oryza sativa subsp. japonica (Rice).